The following is a 355-amino-acid chain: UDP-N-acetylglucosamine--N-acetylmuramyl-(pentapeptide) pyrophosphoryl-undecaprenol N-acetylglucosamine transferase (355 aa).

R166, S196, and Q290 together coordinate UDP-N-acetyl-alpha-D-glucosamine.

It belongs to the glycosyltransferase 28 family. MurG subfamily.

It is found in the cell membrane. It catalyses the reaction Mur2Ac(oyl-L-Ala-gamma-D-Glu-L-Lys-D-Ala-D-Ala)-di-trans,octa-cis-undecaprenyl diphosphate + UDP-N-acetyl-alpha-D-glucosamine = beta-D-GlcNAc-(1-&gt;4)-Mur2Ac(oyl-L-Ala-gamma-D-Glu-L-Lys-D-Ala-D-Ala)-di-trans,octa-cis-undecaprenyl diphosphate + UDP + H(+). Its pathway is cell wall biogenesis; peptidoglycan biosynthesis. Its function is as follows. Cell wall formation. Catalyzes the transfer of a GlcNAc subunit on undecaprenyl-pyrophosphoryl-MurNAc-pentapeptide (lipid intermediate I) to form undecaprenyl-pyrophosphoryl-MurNAc-(pentapeptide)GlcNAc (lipid intermediate II). This is UDP-N-acetylglucosamine--N-acetylmuramyl-(pentapeptide) pyrophosphoryl-undecaprenol N-acetylglucosamine transferase from Staphylococcus haemolyticus (strain JCSC1435).